A 258-amino-acid polypeptide reads, in one-letter code: Imidazole glycerol phosphate synthase subunit HisF (258 aa).

Residues Asp-11 and Asp-130 contribute to the active site.

It belongs to the HisA/HisF family. As to quaternary structure, heterodimer of HisH and HisF.

It localises to the cytoplasm. The catalysed reaction is 5-[(5-phospho-1-deoxy-D-ribulos-1-ylimino)methylamino]-1-(5-phospho-beta-D-ribosyl)imidazole-4-carboxamide + L-glutamine = D-erythro-1-(imidazol-4-yl)glycerol 3-phosphate + 5-amino-1-(5-phospho-beta-D-ribosyl)imidazole-4-carboxamide + L-glutamate + H(+). The protein operates within amino-acid biosynthesis; L-histidine biosynthesis; L-histidine from 5-phospho-alpha-D-ribose 1-diphosphate: step 5/9. Its function is as follows. IGPS catalyzes the conversion of PRFAR and glutamine to IGP, AICAR and glutamate. The HisF subunit catalyzes the cyclization activity that produces IGP and AICAR from PRFAR using the ammonia provided by the HisH subunit. The polypeptide is Imidazole glycerol phosphate synthase subunit HisF (Escherichia coli O17:K52:H18 (strain UMN026 / ExPEC)).